A 200-amino-acid chain; its full sequence is Glutathione S-transferase 1-1 (200 aa).

The 73-residue stretch at 1–73 (GSSPCRSVIM…YLVEKYGKTD (73 aa)) folds into the GST N-terminal domain. Residues Ser2, 43–45 (HTI), and 57–59 (ESR) each bind glutathione. The GST C-terminal domain occupies 79–200 (CPKKRAVINQ…AGCLEFKKFF (122 aa)).

The protein belongs to the GST superfamily. Theta family. Homodimer.

It carries out the reaction RX + glutathione = an S-substituted glutathione + a halide anion + H(+). It catalyses the reaction 1,1,1-trichloro-2,2-bis(4-chlorophenyl)ethane = 1,1-dichloro-2,2-bis(4-chlorophenyl)ethylene + chloride + H(+). Functionally, conjugation of reduced glutathione to a wide number of exogenous and endogenous hydrophobic electrophiles. Has DDT dehydrochlorinase activity. In Drosophila mauritiana (Fruit fly), this protein is Glutathione S-transferase 1-1 (GstD1).